A 267-amino-acid polypeptide reads, in one-letter code: Interleukin-1 beta (267 aa).

Residues 1 to 114 (MAIVPEPAKE…ETCNDDFVCD (114 aa)) constitute a propeptide that is removed on maturation.

Belongs to the IL-1 family. As to quaternary structure, (Microbial infection) Interacts with African swine fever virus (ASFV) protein L83L. In terms of assembly, monomer. In its precursor form, weakly interacts with full-length MEFV; the mature cytokine does not interact at all. Interacts with integrins ITGAV:ITGBV and ITGA5:ITGB1; integrin-binding is required for IL1B signaling. Interacts with cargo receptor TMED10; the interaction is direct and is required for the secretion of IL1B mature form. Interacts with HSP90AB1; the interaction facilitates cargo translocation into the ERGIC. Interacts with HSP90B1; the interaction facilitates cargo translocation into the ERGIC.

It is found in the cytoplasm. The protein resides in the cytosol. It localises to the secreted. The protein localises to the lysosome. Its subcellular location is the extracellular exosome. Functionally, potent pro-inflammatory cytokine. Initially discovered as the major endogenous pyrogen, induces prostaglandin synthesis, neutrophil influx and activation, T-cell activation and cytokine production, B-cell activation and antibody production, and fibroblast proliferation and collagen production. Promotes Th17 differentiation of T-cells. Synergizes with IL12/interleukin-12 to induce IFNG synthesis from T-helper 1 (Th1) cells. Plays a role in angiogenesis by inducing VEGF production synergistically with TNF and IL6. Involved in transduction of inflammation downstream of pyroptosis: its mature form is specifically released in the extracellular milieu by passing through the gasdermin-D (GSDMD) pore. In Sus scrofa (Pig), this protein is Interleukin-1 beta (IL1B).